Reading from the N-terminus, the 312-residue chain is Tyrosine recombinase XerC (312 aa).

The Core-binding (CB) domain occupies 10-101; that stretch reads PDLQAARESW…GIRSLLRFLE (92 aa). One can recognise a Tyr recombinase domain in the interval 122 to 306; the sequence is SLPKPLTASD…DTARLLEIYE (185 aa). Residues R165, K190, H258, R261, and H284 contribute to the active site. Y293 functions as the O-(3'-phospho-DNA)-tyrosine intermediate in the catalytic mechanism.

Belongs to the 'phage' integrase family. XerC subfamily. As to quaternary structure, forms a cyclic heterotetrameric complex composed of two molecules of XerC and two molecules of XerD.

Its subcellular location is the cytoplasm. Site-specific tyrosine recombinase, which acts by catalyzing the cutting and rejoining of the recombining DNA molecules. The XerC-XerD complex is essential to convert dimers of the bacterial chromosome into monomers to permit their segregation at cell division. It also contributes to the segregational stability of plasmids. The protein is Tyrosine recombinase XerC of Mesorhizobium japonicum (strain LMG 29417 / CECT 9101 / MAFF 303099) (Mesorhizobium loti (strain MAFF 303099)).